The primary structure comprises 156 residues: Small ribosomal subunit protein uS7 (156 aa).

The protein belongs to the universal ribosomal protein uS7 family. In terms of assembly, part of the 30S ribosomal subunit. Contacts proteins S9 and S11.

Its function is as follows. One of the primary rRNA binding proteins, it binds directly to 16S rRNA where it nucleates assembly of the head domain of the 30S subunit. Is located at the subunit interface close to the decoding center, probably blocks exit of the E-site tRNA. In Caldanaerobacter subterraneus subsp. tengcongensis (strain DSM 15242 / JCM 11007 / NBRC 100824 / MB4) (Thermoanaerobacter tengcongensis), this protein is Small ribosomal subunit protein uS7.